The chain runs to 256 residues: Type III pantothenate kinase (256 aa).

ATP is bound at residue 6 to 13 (DIGNTHTV). Substrate is bound by residues Y100 and 107-110 (GADR). The Proton acceptor role is filled by D109. A K(+)-binding site is contributed by D129. T132 serves as a coordination point for ATP. T184 is a binding site for substrate.

It belongs to the type III pantothenate kinase family. In terms of assembly, homodimer. The cofactor is NH4(+). K(+) serves as cofactor.

It is found in the cytoplasm. It carries out the reaction (R)-pantothenate + ATP = (R)-4'-phosphopantothenate + ADP + H(+). It functions in the pathway cofactor biosynthesis; coenzyme A biosynthesis; CoA from (R)-pantothenate: step 1/5. Its function is as follows. Catalyzes the phosphorylation of pantothenate (Pan), the first step in CoA biosynthesis. This Acidothermus cellulolyticus (strain ATCC 43068 / DSM 8971 / 11B) protein is Type III pantothenate kinase.